The sequence spans 68 residues: Large ribosomal subunit protein bL32 (68 aa).

This sequence belongs to the bacterial ribosomal protein bL32 family.

In Aster yellows witches'-broom phytoplasma (strain AYWB), this protein is Large ribosomal subunit protein bL32.